Reading from the N-terminus, the 309-residue chain is D-alanine--D-alanine ligase (309 aa).

Positions 104–306 (KLLWQSFNLP…YQILVQKILE (203 aa)) constitute an ATP-grasp domain. 137-192 (ISLLGLPIIVKPNQEGSSIGITIVYSYETLYKACKTAFIFDNSILIEKFIYGEEYT) is a binding site for ATP. Positions 260, 273, and 275 each coordinate Mg(2+).

The protein belongs to the D-alanine--D-alanine ligase family. Requires Mg(2+) as cofactor. The cofactor is Mn(2+).

Its subcellular location is the cytoplasm. It carries out the reaction 2 D-alanine + ATP = D-alanyl-D-alanine + ADP + phosphate + H(+). The protein operates within cell wall biogenesis; peptidoglycan biosynthesis. Functionally, cell wall formation. In Buchnera aphidicola subsp. Baizongia pistaciae (strain Bp), this protein is D-alanine--D-alanine ligase.